The following is a 183-amino-acid chain: Protein Syd (183 aa).

Belongs to the Syd family.

The protein resides in the cell inner membrane. Functionally, interacts with the SecY protein in vivo. May bind preferentially to an uncomplexed state of SecY, thus functioning either as a chelating agent for excess SecY in the cell or as a regulatory factor that negatively controls the translocase function. The sequence is that of Protein Syd from Aliivibrio fischeri (strain ATCC 700601 / ES114) (Vibrio fischeri).